The chain runs to 516 residues: uncharacterized protein (516 aa).

9 helical membrane passes run 183-203 (SAAD…GDGV), 261-281 (VLKT…TYII), 308-328 (VMNG…TALL), 329-349 (LDHQ…AYSF), 356-376 (LLDV…GQVL), 379-399 (LAFS…LALA), 430-450 (LGHG…FLAL), 461-481 (PAWL…IWLL), and 492-512 (IVFA…ASAF).

It is found in the cell membrane. Functionally, possible permease/transporter. This is an uncharacterized protein from Sinorhizobium fredii (strain NBRC 101917 / NGR234).